The sequence spans 259 residues: Sorbitol-6-phosphate 2-dehydrogenase (259 aa).

V4–D33 contributes to the NAD(+) binding site. S141 contributes to the substrate binding site. Y154 (proton acceptor) is an active-site residue.

Belongs to the short-chain dehydrogenases/reductases (SDR) family. As to quaternary structure, homotetramer.

The catalysed reaction is D-sorbitol 6-phosphate + NAD(+) = beta-D-fructose 6-phosphate + NADH + H(+). It functions in the pathway carbohydrate metabolism; D-sorbitol degradation; D-fructose 6-phosphate from D-sorbitol 6-phosphate: step 1/1. The protein is Sorbitol-6-phosphate 2-dehydrogenase (srlD) of Escherichia coli (strain K12).